Reading from the N-terminus, the 761-residue chain is Zinc finger protein 711 (761 aa).

Glycyl lysine isopeptide (Lys-Gly) (interchain with G-Cter in SUMO2) cross-links involve residues K224, K235, and K296. 5 C2H2-type zinc fingers span residues 383–408 (YPCHICTKKFKSRGFLKRHMKNHPDH), 414–436 (YQCTDCDFTTNKKVSFHNHLESH), 476–499 (HKCKYCDYETAEQGLLNRHLLAVH), 505–527 (HVCVECGKGFRHPSELKKHMRTH), and 533–556 (YQCQYCIFRCADQSNLKTHIKSKH). The segment at 515-761 (RHPSELKKHM…IMRHHKEALM (247 aa)) is required for transcriptional activation. The C2H2-type 6; atypical zinc finger occupies 562–584 (YKCEHCPQAFGDERELQRHLDLF). The Zn(2+) site is built by C564, C567, and H580. 6 C2H2-type zinc fingers span residues 590–613 (HQCPHCDHKSTNSSDLKRHIISVH), 619–641 (HKCEVCDKGFHRPSELKKHSDIH), 647–670 (HQCRHCDFKTSDPFILSGHILSVH), 676–698 (LKCKRCKRGFRQQNELKKHMKTH), 704–727 (YQCEYCEYSTTDASGFKRHVISIH), and 733–755 (HRCEFCKKGFRRPSEKNQHIMRH).

Belongs to the krueppel C2H2-type zinc-finger protein family. In terms of assembly, interacts with PHF8. As to expression, expressed in neural tissues.

The protein resides in the nucleus. Functionally, transcription regulator required for brain development. Probably acts as a transcription factor that binds to the promoter of target genes and recruits PHF8 histone demethylase, leading to activated expression of genes involved in neuron development, such as KDM5C. May compete with transcription factor ARX for activation of expression of KDM5C. This chain is Zinc finger protein 711 (ZNF711), found in Homo sapiens (Human).